The primary structure comprises 180 residues: uncharacterized protein (180 aa).

A signal peptide spans 1–30 (MRHKIITFILAVVVIIIIGNMIGGGGGSEA). The disordered stretch occupies residues 25 to 46 (GGGSEATSKTSSSSKAETEKTY). A compositionally biased stretch (low complexity) spans 29 to 39 (EATSKTSSSSK).

It localises to the secreted. This is an uncharacterized protein from Bacillus subtilis (strain 168).